Here is a 389-residue protein sequence, read N- to C-terminus: bZIP transcription factor 68 (389 aa).

Residues 1–16 (MGSSEMEKSGKEKEPK) are compositionally biased toward basic and acidic residues. Disordered regions lie at residues 1–42 (MGSS…VSAG), 124–154 (MAEA…KRSK), 170–236 (AGKN…NLPV), 285–318 (QPWL…RKQA), and 356–389 (SSLK…QDVA). The segment covering 19 to 32 (PPSTSSSAPATVVS) has biased composition (low complexity). Over residues 137–149 (GDGKPSDGKEKLP) the composition is skewed to basic and acidic residues. Lysine 154 is covalently cross-linked (Glycyl lysine isopeptide (Lys-Gly) (interchain with G-Cter in ubiquitin)). Over residues 170–205 (AGKNSGASANGACSKSAESGSDGSSDGSDANSQNDS) the composition is skewed to low complexity. Basic and acidic residues-rich tracts occupy residues 206-215 (GSRHNGKDGE) and 304-318 (SNRE…RKQA). Residues 295-358 (EIKRQRRKQS…EELLAENSSL (64 aa)) enclose the bZIP domain. Residues 297 to 316 (KRQRRKQSNRESARRSRLRK) form a basic motif region. The tract at residues 323 to 358 (LAQRAEVLNGENSSLRAEINKLKSQYEELLAENSSL) is leucine-zipper. The segment covering 356-366 (SSLKNKFSSAP) has biased composition (polar residues). Over residues 372–389 (DLDKNEQEPQRSTRQDVA) the composition is skewed to basic and acidic residues.

It belongs to the bZIP family. As to quaternary structure, monomer, homodimer and heterodimers with GBF1/BZIP41, GBF2/BZIP54 and GBF3/BZIP55. Heterodimers with BZIP16. Interacts with GIP1.

The protein localises to the nucleus. Its function is as follows. Transcriptional activator that binds to the G-box motif (5'-CACGTG-3') and other cis-acting elements with 5'-ACGT-3' core, such as Hex, C-box and as-1 motifs. Possesses high binding affinity to G-box, much lower affinity to Hex and C-box, and little affinity to as-1 element. G-box and G-box-like motifs are cis-acting elements defined in promoters of certain plant genes which are regulated by such diverse stimuli as light-induction or hormone control. Binds to the G-box motif 5'-CACGTG-3' of LHCB2.4 (At3g27690) promoter. May act as transcriptional activator in light-regulated expression of LHCB2.4. Probably binds DNA as monomer. DNA-binding activity is redox-dependent. In Arabidopsis thaliana (Mouse-ear cress), this protein is bZIP transcription factor 68.